The primary structure comprises 310 residues: Tagatose-6-phosphate kinase (310 aa).

Belongs to the carbohydrate kinase PfkB family. LacC subfamily.

The enzyme catalyses D-tagatofuranose 6-phosphate + ATP = D-tagatofuranose 1,6-bisphosphate + ADP + H(+). Its pathway is carbohydrate metabolism; D-tagatose 6-phosphate degradation; D-glyceraldehyde 3-phosphate and glycerone phosphate from D-tagatose 6-phosphate: step 1/2. This is Tagatose-6-phosphate kinase from Streptococcus uberis (strain ATCC BAA-854 / 0140J).